The sequence spans 296 residues: Glycine N-acyltransferase (296 aa).

Position 16 is an N6-acetyllysine; alternate (lysine 16). Lysine 16 carries the post-translational modification N6-succinyllysine; alternate. Residue lysine 113 is modified to N6-acetyllysine. An N6-acetyllysine; alternate mark is found at lysine 127, lysine 141, and lysine 142. An N6-succinyllysine; alternate mark is found at lysine 127, lysine 141, and lysine 142. N6-acetyllysine occurs at positions 159 and 167. Lysine 169 is modified (N6-succinyllysine). Lysine 183 and lysine 256 each carry N6-acetyllysine; alternate. An N6-succinyllysine; alternate mark is found at lysine 183 and lysine 256. An N6-succinyllysine modification is found at lysine 267.

Belongs to the glycine N-acyltransferase family.

The protein resides in the mitochondrion. It carries out the reaction an acyl-CoA + glycine = an N-acylglycine + CoA + H(+). It catalyses the reaction benzoyl-CoA + glycine = N-benzoylglycine + CoA + H(+). In terms of biological role, mitochondrial acyltransferase which transfers an acyl group to the N-terminus of glycine and glutamine, although much less efficiently. Can conjugate a multitude of substrates to form a variety of N-acylglycines, thereby detoxify xenobiotics, such as benzoic acid or salicylic acid, and endogenous organic acids, such as isovaleric acid. This is Glycine N-acyltransferase (Glyat) from Mus musculus (Mouse).